A 672-amino-acid polypeptide reads, in one-letter code: MRSIRSFANDDRHVMVKHSTIYPSPEELEAVQNMVSTVECALKHVSDWLDETNKGTKTEGETEVKKDEAGENYSKDQGGRTLCGVMRIGLVAKGLLIKDDMDLELVLMCKDKPTETLLNTVKDNLPIQIQKLTEEKYQVEQCVNEASIIIRNTKEPTLTLKVILTSPLIRDELEKKDGENVSMKDPPDLLDRQKCLNALASLRHAKWFQARANGLKSCVIVLRILRDLCNRVPTWAPLKGWPLELICEKSIGTCNRPLGAGEALRRVMECLASGILLPGGPGLHDPCERDPTDALSYMTIQQKEDITHSAQHALRLSAFGQIYKVLEMDPLPSSKPFQKYSWSVTDKEGAGSSALKRPFEDGLGDDKDPNKKMKRNLRKILDSKAIDLMNALMRLNQIRPGLQYKLLSQSGPVHAPVFTMSVDVDGTTYEASGPSKKTAKLHVAVKVLQAMGYPTGFDADIECMSSDEKSDNESKNETVSSNSSNNTGNSTTETSSTLEVRTQGPILTASGKNPVMELNEKRRGLKYELISETGGSHDKRFVMEVEVDGQKFRGAGPNKKVAKASAALAALEKLFSGPNAANNKKKKIIPQAKGVVNTAVSAAVQAVRGRGRGTLTRGAFVGAAAAPGYIAPGYGTPYGYSTAAPAYGLPKRMVLLPVMKFPTYPVPHYSFF.

Residues 5–363 (RSFANDDRHV…ALKRPFEDGL (359 aa)) enclose the DZF domain. 2 disordered regions span residues 52–73 (TNKGTKTEGETEVKKDEAGENY) and 349–371 (GAGSSALKRPFEDGLGDDKDPNK). Residues 357 to 371 (RPFEDGLGDDKDPNK) are compositionally biased toward basic and acidic residues. A DRBM 1 domain is found at 387-453 (DLMNALMRLN…AVKVLQAMGY (67 aa)). A compositionally biased stretch (basic and acidic residues) spans 466–476 (SDEKSDNESKN). Residues 466–499 (SDEKSDNESKNETVSSNSSNNTGNSTTETSSTLE) are disordered. The span at 477 to 497 (ETVSSNSSNNTGNSTTETSST) shows a compositional bias: low complexity. Residues 510–576 (SGKNPVMELN…ALAALEKLFS (67 aa)) form the DRBM 2 domain. Residues Arg612 and Arg617 each carry the asymmetric dimethylarginine modification.

As to quaternary structure, interacts with EIF2AK2. Associates with microtubules; it is unsure whether such interaction is direct or indirect.

The protein resides in the cytoplasm. Its function is as follows. Involved in spermatogenesis and sperm function. Plays a role in regulation of cell growth. Binds to double-stranded DNA and RNA. Binds most efficiently to poly(I:C) RNA than to poly(dI:dC) DNA. Binds also to single-stranded poly(G) RNA. Binds non-specifically to the mRNA PRM1 3'-UTR and adenovirus VA RNA. This is Spermatid perinuclear RNA-binding protein (STRBP) from Pongo abelii (Sumatran orangutan).